We begin with the raw amino-acid sequence, 101 residues long: NAD(P)H-quinone oxidoreductase subunit 4L, chloroplastic (101 aa).

The next 3 membrane-spanning stretches (helical) occupy residues 2-22 (MLEY…YGLI), 32-52 (MCLE…SYFF), and 61-81 (IFSI…LAIV).

This sequence belongs to the complex I subunit 4L family. NDH is composed of at least 16 different subunits, 5 of which are encoded in the nucleus.

The protein localises to the plastid. It is found in the chloroplast thylakoid membrane. It catalyses the reaction a plastoquinone + NADH + (n+1) H(+)(in) = a plastoquinol + NAD(+) + n H(+)(out). The catalysed reaction is a plastoquinone + NADPH + (n+1) H(+)(in) = a plastoquinol + NADP(+) + n H(+)(out). Its function is as follows. NDH shuttles electrons from NAD(P)H:plastoquinone, via FMN and iron-sulfur (Fe-S) centers, to quinones in the photosynthetic chain and possibly in a chloroplast respiratory chain. The immediate electron acceptor for the enzyme in this species is believed to be plastoquinone. Couples the redox reaction to proton translocation, and thus conserves the redox energy in a proton gradient. The sequence is that of NAD(P)H-quinone oxidoreductase subunit 4L, chloroplastic from Ipomoea purpurea (Common morning glory).